Reading from the N-terminus, the 83-residue chain is Small ribosomal subunit protein eS21 (83 aa).

The protein belongs to the eukaryotic ribosomal protein eS21 family. As to quaternary structure, component of the 40S small ribosomal subunit. Interacts with sta.

The protein resides in the cytoplasm. It localises to the cytosol. Its subcellular location is the rough endoplasmic reticulum. Its function is as follows. May be an associated component of the ribosome rather than a core structural subunit. May act as a translation initiation factor. Has a role in regulation of cell proliferation in the hematopoietic organs and the imaginal disks of larva. In Drosophila erecta (Fruit fly), this protein is Small ribosomal subunit protein eS21 (RpS21).